Reading from the N-terminus, the 281-residue chain is MDNRGIGYIDSGLGGLTVVREALKQLPNESVYFVGDEARMPYGPRPTVEIQKFTLQMADFLVKKHNIKALVVACNTATAQALPQLRAYLEIPVIGVISAGALAGINATRNLHVNVIGTQSTVESKAYYDQLIALNSDLVIEQKALPEFVQLVESDMAGTPKGKQIVYQAIHNWMEEKNDGKKSDTLVLGCTHFPILKKEIQAAVDKNVAVVDPASEEILQTAEIMRKNNAFHDSKNINHHEKDVFYTTGNIGRFSKFTREWLNKSNLTIKELHIDQKGLKE.

Residues Asp10–Ser11 and Tyr42–Gly43 contribute to the substrate site. Cys74 functions as the Proton donor/acceptor in the catalytic mechanism. A substrate-binding site is contributed by Asn75–Thr76. Cys190 (proton donor/acceptor) is an active-site residue. Thr191–His192 is a binding site for substrate.

This sequence belongs to the aspartate/glutamate racemases family.

It carries out the reaction L-glutamate = D-glutamate. The protein operates within cell wall biogenesis; peptidoglycan biosynthesis. Functionally, provides the (R)-glutamate required for cell wall biosynthesis. This chain is Glutamate racemase, found in Oenococcus oeni (strain ATCC BAA-331 / PSU-1).